The following is a 173-amino-acid chain: Translation initiation factor IF-3 (173 aa).

Belongs to the IF-3 family. Monomer.

It is found in the cytoplasm. In terms of biological role, IF-3 binds to the 30S ribosomal subunit and shifts the equilibrium between 70S ribosomes and their 50S and 30S subunits in favor of the free subunits, thus enhancing the availability of 30S subunits on which protein synthesis initiation begins. The protein is Translation initiation factor IF-3 of Methylorubrum extorquens (strain CM4 / NCIMB 13688) (Methylobacterium extorquens).